Here is a 227-residue protein sequence, read N- to C-terminus: ATP phosphoribosyltransferase (227 aa).

This sequence belongs to the ATP phosphoribosyltransferase family. Short subfamily. As to quaternary structure, heteromultimer composed of HisG and HisZ subunits.

The protein resides in the cytoplasm. It catalyses the reaction 1-(5-phospho-beta-D-ribosyl)-ATP + diphosphate = 5-phospho-alpha-D-ribose 1-diphosphate + ATP. Its pathway is amino-acid biosynthesis; L-histidine biosynthesis; L-histidine from 5-phospho-alpha-D-ribose 1-diphosphate: step 1/9. Its function is as follows. Catalyzes the condensation of ATP and 5-phosphoribose 1-diphosphate to form N'-(5'-phosphoribosyl)-ATP (PR-ATP). Has a crucial role in the pathway because the rate of histidine biosynthesis seems to be controlled primarily by regulation of HisG enzymatic activity. This is ATP phosphoribosyltransferase from Nitrosospira multiformis (strain ATCC 25196 / NCIMB 11849 / C 71).